Consider the following 358-residue polypeptide: Popeye domain-containing protein 1 (358 aa).

Residues 1–48 (MNSTESIPLAQSTVAGFTSELESLTPVPSNETTCENWREIHHLVFHVA) are Extracellular-facing. Asn-2 and Asn-30 each carry an N-linked (GlcNAc...) asparagine glycan. A helical transmembrane segment spans residues 49 to 69 (NVCFAVGLLIPTTLHLHMILL). Position 70 (Arg-70) is a topological domain, cytoplasmic. Residues 71 to 91 (VMLSLGCTLYVVWATLYRCAL) form a helical membrane-spanning segment. Asp-92 is a topological domain (extracellular). The chain crosses the membrane as a helical span at residues 93-113 (VMIWNSVFLGINILHLSYLLY). The interval 93-115 (VMIWNSVFLGINILHLSYLLYKK) is required for interaction with CAV3. Residues 114 to 358 (KKRPVKIEKE…PDALKVHQLP (245 aa)) are Cytoplasmic-facing. The interval 136-186 (RVPPDLFRRLTGQFCMIQTLKRGQVYATEDKTSVDDRLSILLKGRMKVSYR) is required for interaction with KCNK2. 2 positions are modified to phosphoserine: Ser-295 and Ser-318. The segment covering 313–323 (SSSTASLPMSS) has biased composition (low complexity). A disordered region spans residues 313-350 (SSSTASLPMSSPQQRASAKMKPIEEGVEDDDEVFVSPD).

Belongs to the popeye family. Homodimer. Homodimerization requires the C-terminus cytoplasmic region. Interacts (via the C-terminus cytoplasmic tail) with TJP1. Interacts (via the C-terminus cytoplasmic tail) with ARHGEF25/GEFT (via the DH domain). Interacts (via the C-terminus cytoplasmic tail) with VAMP3. Interacts with KCNK2; the interaction enhances KCNK2 surface expression and is inhibited by cAMP. Interacts with CAV3. In terms of tissue distribution, expressed in epithelial cells, skeletal muscle, heart and intestinal smooth muscle (at protein level). Expressed in fetal and adult heart and skeletal muscle.

The protein resides in the lateral cell membrane. It localises to the cell junction. The protein localises to the tight junction. It is found in the membrane. Its subcellular location is the cell membrane. The protein resides in the sarcolemma. It localises to the caveola. Functionally, cell adhesion molecule involved in the establishment and/or maintenance of cell integrity. Involved in the formation and regulation of the tight junction (TJ) paracellular permeability barrier in epithelial cells. Plays a role in VAMP3-mediated vesicular transport and recycling of different receptor molecules through its interaction with VAMP3. Plays a role in the regulation of cell shape and movement by modulating the Rho-family GTPase activity through its interaction with ARHGEF25/GEFT. Induces primordial adhesive contact and aggregation of epithelial cells in a Ca(2+)-independent manner. Also involved in striated muscle regeneration and repair and in the regulation of cell spreading. Important for the maintenance of cardiac function. Plays a regulatory function in heart rate dynamics mediated, at least in part, through cAMP-binding and, probably, by increasing cell surface expression of the potassium channel KCNK2 and enhancing current density. Is a caveolae-associated protein important for the preservation of caveolae structural and functional integrity as well as for heart protection against ischemia injury. In Mus musculus (Mouse), this protein is Popeye domain-containing protein 1.